Consider the following 150-residue polypeptide: MGNETVVVAETAGSIKVAVVVCLLRGQNVLLGRRRSSLGDSTFSLPSGHLEFGESFEECAARELKEETDLDIGKIELLTVTNNLFLDEAKPSQYVAVFMRAVLADPRQEPQNIEPEFCDGWGWYEWDNLPKPLFWPLDNVVQDGFNPFPT.

A Nudix hydrolase domain is found at Ser14 to Pro147. The Nudix box signature appears at Gly48 to Asp69. Positions 63 and 67 each coordinate Mg(2+).

It belongs to the Nudix hydrolase family. In terms of tissue distribution, expressed in petals. Little or no expression in stamens, sepals or young leaves.

Its subcellular location is the cytoplasm. It catalyses the reaction (2E)-geranyl diphosphate + H2O = (2E)-geranyl phosphate + phosphate + H(+). Involved in a cytosolic pathway for the biosynthesis of free monoterpene alcohols that contribute to fragrance. Lacks terpene synthase activity, but has a diphosphohydrolase activity with geranyl diphosphate and farnesyl diphosphate as substrates. No activity with 8-oxo-dGTP and dGTP and unable to dephosphorylate geranyl phosphate to geraniol. This Rosa hybrid cultivar protein is Geranyl diphosphate phosphohydrolase.